A 101-amino-acid chain; its full sequence is Small ribosomal subunit protein uS14 (101 aa).

The tract at residues 1-20 (MAKTSAVNRNKMRERMASRD) is disordered. Basic and acidic residues predominate over residues 11-20 (KMRERMASRD).

Belongs to the universal ribosomal protein uS14 family. In terms of assembly, part of the 30S ribosomal subunit. Contacts proteins S3 and S10.

Its function is as follows. Binds 16S rRNA, required for the assembly of 30S particles and may also be responsible for determining the conformation of the 16S rRNA at the A site. The chain is Small ribosomal subunit protein uS14 from Granulibacter bethesdensis (strain ATCC BAA-1260 / CGDNIH1).